The primary structure comprises 331 residues: Phosphate acyltransferase (331 aa).

It belongs to the PlsX family. As to quaternary structure, homodimer. Probably interacts with PlsY.

Its subcellular location is the cytoplasm. The catalysed reaction is a fatty acyl-[ACP] + phosphate = an acyl phosphate + holo-[ACP]. It functions in the pathway lipid metabolism; phospholipid metabolism. In terms of biological role, catalyzes the reversible formation of acyl-phosphate (acyl-PO(4)) from acyl-[acyl-carrier-protein] (acyl-ACP). This enzyme utilizes acyl-ACP as fatty acyl donor, but not acyl-CoA. This is Phosphate acyltransferase from Lactococcus lactis subsp. cremoris (strain SK11).